A 294-amino-acid chain; its full sequence is RNA polymerase sigma-K factor (294 aa).

A propeptide spanning residues 1-20 (MVTGVFAALGFVVKELVFLV) is cleaved from the precursor. Positions 1–156 (MVTGVFAALG…VNNCFFIFKS (156 aa)) are encoded by spoIVCB. The Polymerase core binding motif lies at 79–92 (DLISIGTIGLIKGI). The not present in recombined mature factor stretch occupies residues 114–165 (EIVITKGGCIHPSLIRFNIYGVRIHNGNFFHDKVNNCFFIFKSMPPLFVMNN). The encoded by spoIIIC stretch occupies residues 157–294 (MPPLFVMNNE…KEKRKKAKGK (138 aa)). Positions 251 to 270 (QREIAKELGISRSYVSRIEK) form a DNA-binding region, H-T-H motif.

It belongs to the sigma-70 factor family.

Sigma factors are initiation factors that promote the attachment of RNA polymerase to specific initiation sites and are then released. This sigma factor is responsible for the expression of sporulation specific genes in the mother cell. The sequence is that of RNA polymerase sigma-K factor (sigK) from Bacillus subtilis (strain 168).